We begin with the raw amino-acid sequence, 317 residues long: Iron-uptake system-binding protein (317 aa).

The first 19 residues, 1–19, serve as a signal peptide directing secretion; it reads MKKISLTLLILLLALTAAA. The N-palmitoyl cysteine moiety is linked to residue Cys-20. Cys-20 is lipidated: S-diacylglycerol cysteine. One can recognise a Fe/B12 periplasmic-binding domain in the interval 57 to 317; sequence IAITGSVESM…KAAAEKLTQN (261 aa).

This sequence belongs to the bacterial solute-binding protein 8 family. In terms of assembly, the complex is composed of one ATP-binding protein (YusV), two transmembrane proteins (FeuB and FeuC) and a solute-binding protein (FeuA).

It localises to the cell membrane. The protein localises to the cytoplasm. The protein resides in the membrane raft. Functionally, involved in the uptake of iron. In terms of biological role, part of the ABC transporter complex FeuABC/YusV involved in import of the catecholate siderophores bacillibactin and enterobactin. This is Iron-uptake system-binding protein (feuA) from Bacillus subtilis (strain 168).